Reading from the N-terminus, the 267-residue chain is Regulatory protein RecX (267 aa).

This sequence belongs to the RecX family.

It localises to the cytoplasm. Its function is as follows. Modulates RecA activity. This chain is Regulatory protein RecX, found in Staphylococcus epidermidis (strain ATCC 12228 / FDA PCI 1200).